The following is a 45-amino-acid chain: U1-ctenitoxin-Pk1a (45 aa).

Cystine bridges form between Cys-3–Cys-16, Cys-10–Cys-25, Cys-15–Cys-34, and Cys-27–Cys-32.

Expressed by the venom gland.

Its subcellular location is the secreted. In terms of biological role, neurotoxin. Causes rapid general flaccid paralysis and death in mice at dose levels of 5 ug per mouse. In Phoneutria keyserlingi (Brazilian wandering spider), this protein is U1-ctenitoxin-Pk1a.